Here is a 341-residue protein sequence, read N- to C-terminus: UDP-N-acetylenolpyruvoylglucosamine reductase (341 aa).

One can recognise an FAD-binding PCMH-type domain in the interval 15–185 (VEQSCLSLIE…TAVGLRLPKA (171 aa)). Residue Arg-161 is part of the active site. The active-site Proton donor is Ser-231. Glu-327 is an active-site residue.

It belongs to the MurB family. The cofactor is FAD.

It localises to the cytoplasm. It catalyses the reaction UDP-N-acetyl-alpha-D-muramate + NADP(+) = UDP-N-acetyl-3-O-(1-carboxyvinyl)-alpha-D-glucosamine + NADPH + H(+). It functions in the pathway cell wall biogenesis; peptidoglycan biosynthesis. Cell wall formation. This chain is UDP-N-acetylenolpyruvoylglucosamine reductase, found in Shewanella sp. (strain ANA-3).